Consider the following 211-residue polypeptide: FMN-dependent NADH:quinone oxidoreductase (211 aa).

17–19 contributes to the FMN binding site; it reads SYS.

This sequence belongs to the azoreductase type 1 family. Homodimer. It depends on FMN as a cofactor.

The catalysed reaction is 2 a quinone + NADH + H(+) = 2 a 1,4-benzosemiquinone + NAD(+). It carries out the reaction N,N-dimethyl-1,4-phenylenediamine + anthranilate + 2 NAD(+) = 2-(4-dimethylaminophenyl)diazenylbenzoate + 2 NADH + 2 H(+). Quinone reductase that provides resistance to thiol-specific stress caused by electrophilic quinones. In terms of biological role, also exhibits azoreductase activity. Catalyzes the reductive cleavage of the azo bond in aromatic azo compounds to the corresponding amines. The sequence is that of FMN-dependent NADH:quinone oxidoreductase from Bacillus pumilus (strain SAFR-032).